The sequence spans 364 residues: tRNA 2-selenouridine synthase (364 aa).

A Rhodanese domain is found at 14–137; it reads LIADTPIIDV…LRQTAIQATI (124 aa). Cys-97 (S-selanylcysteine intermediate) is an active-site residue.

This sequence belongs to the SelU family. As to quaternary structure, monomer.

The catalysed reaction is 5-methylaminomethyl-2-thiouridine(34) in tRNA + selenophosphate + (2E)-geranyl diphosphate + H2O + H(+) = 5-methylaminomethyl-2-selenouridine(34) in tRNA + (2E)-thiogeraniol + phosphate + diphosphate. It carries out the reaction 5-methylaminomethyl-2-thiouridine(34) in tRNA + (2E)-geranyl diphosphate = 5-methylaminomethyl-S-(2E)-geranyl-thiouridine(34) in tRNA + diphosphate. The enzyme catalyses 5-methylaminomethyl-S-(2E)-geranyl-thiouridine(34) in tRNA + selenophosphate + H(+) = 5-methylaminomethyl-2-(Se-phospho)selenouridine(34) in tRNA + (2E)-thiogeraniol. It catalyses the reaction 5-methylaminomethyl-2-(Se-phospho)selenouridine(34) in tRNA + H2O = 5-methylaminomethyl-2-selenouridine(34) in tRNA + phosphate. Its function is as follows. Involved in the post-transcriptional modification of the uridine at the wobble position (U34) of tRNA(Lys), tRNA(Glu) and tRNA(Gln). Catalyzes the conversion of 2-thiouridine (S2U-RNA) to 2-selenouridine (Se2U-RNA). Acts in a two-step process involving geranylation of 2-thiouridine (S2U) to S-geranyl-2-thiouridine (geS2U) and subsequent selenation of the latter derivative to 2-selenouridine (Se2U) in the tRNA chain. This chain is tRNA 2-selenouridine synthase, found in Shigella dysenteriae serotype 1 (strain Sd197).